A 792-amino-acid polypeptide reads, in one-letter code: Probable G-protein coupled receptor 156 (792 aa).

Residues 1–49 (MEPEINCSEFCDSFPGQELDRRPLHDLCKTTITDSQHGSADISPLSPAL) are Extracellular-facing. Asparagine 6 is a glycosylation site (N-linked (GlcNAc...) asparagine). Residues 50-70 (LGVIWTFLSCGLLLVLFFLAF) traverse the membrane as a helical segment. Over 71-86 (TIRCRKNRIVKMSSPN) the chain is Cytoplasmic. Residues 87 to 107 (LNIVTLLGSCLTYSSAYLFGI) traverse the membrane as a helical segment. At 108-118 (QDALVGSSVEA) the chain is on the extracellular side. The chain crosses the membrane as a helical span at residues 119-139 (LIQTRLSLLCIGTTLVFGPIL). Residues 140–164 (GKSWRLYKVFTQRVPDKRVIIKDLQ) lie on the Cytoplasmic side of the membrane. A helical membrane pass occupies residues 165–185 (LLGLVAALVVADVILLVTWVL). The Extracellular segment spans residues 186–222 (TDPIQCLQILGVSMKVTGRDVSCSLTNTHFCASRYSD). The chain crosses the membrane as a helical span at residues 223 to 243 (VWIALVLGCKGLLLLYGAYLA). At 244 to 257 (GLTNHVSSPPVNQS) the chain is on the cytoplasmic side. A helical transmembrane segment spans residues 258–278 (LTIMVGVNLLLLTAGLLFVVT). At 279-287 (RYLHSWPNL) the chain is on the extracellular side. A helical membrane pass occupies residues 288-308 (VFGLTSGGIFVCTTTVNCCVF). The Cytoplasmic segment spans residues 309 to 792 (LPQLRQRKAF…FKDDLKPTLV (484 aa)). A coiled-coil region spans residues 354–390 (EXSCMERLLTEKNAVIESLQEQVSNAKEKLVKLMSAE). 3 disordered regions span residues 407 to 457 (GGPA…KYDM), 469 to 516 (GCSQ…EVLP), and 538 to 704 (DLGT…QRQP). Positions 422 to 434 (AAAEDSLPASAAS) are enriched in low complexity. Composition is skewed to basic and acidic residues over residues 443–457 (SRRD…KYDM) and 474–486 (PKAE…ERGN). Residues 554-567 (PWKSNTSGSPQKLS) are compositionally biased toward polar residues. The span at 578 to 589 (VRRRRAAQRARS) shows a compositional bias: basic residues. Over residues 602 to 619 (QANNTVSGSQNGLIVQNR) the composition is skewed to polar residues. Basic and acidic residues predominate over residues 620–635 (DSPRLDHHNARSKEPR). Positions 675–704 (PRQPSASAPAQSSTAPCLSSXPALPRQRQP) are enriched in low complexity.

It belongs to the G-protein coupled receptor 3 family. GABA-B receptor subfamily. As to expression, widely expressed throughout the brain and is particularly dense in the olfactory tubercles, islands of Calleja, nucleus accumbens, piriform cortex and all fields of the hippocampus.

The protein resides in the cell membrane. Functionally, orphan G-protein coupled receptor involved in the regulation of hair cell orientation in mechanosensory organs of the inner ear. It is required to trigger a 180 degree reversal in hair cell orientation, creating a virtual line of polarity reversal (LPR) across which stereociliary bundles are arranged in opposite orientations. The sequence is that of Probable G-protein coupled receptor 156 (Gpr156) from Rattus norvegicus (Rat).